An 87-amino-acid chain; its full sequence is Acetolactate synthase isozyme 2 small subunit (87 aa).

The ACT domain occupies 5 to 78 (QVNVSARFNP…DVAHVAICQS (74 aa)).

As to quaternary structure, tetramer of two large and two small chains. Mg(2+) serves as cofactor. Requires thiamine diphosphate as cofactor.

The catalysed reaction is 2 pyruvate + H(+) = (2S)-2-acetolactate + CO2. It participates in amino-acid biosynthesis; L-isoleucine biosynthesis; L-isoleucine from 2-oxobutanoate: step 1/4. The protein operates within amino-acid biosynthesis; L-valine biosynthesis; L-valine from pyruvate: step 1/4. The protein is Acetolactate synthase isozyme 2 small subunit (ilvM) of Escherichia coli O6:H1 (strain CFT073 / ATCC 700928 / UPEC).